The chain runs to 838 residues: Translation initiation factor IF-2 (838 aa).

Residues 50-108 (VQSGKKPESPEKKDIKQNTQKEAPETQTQQKPIEQEVETKQNIDSTPIKVEPKQESLAS) are disordered. Residues 54-65 (KKPESPEKKDIK) show a composition bias toward basic and acidic residues. The segment covering 66–81 (QNTQKEAPETQTQQKP) has biased composition (polar residues). Positions 337–506 (SRAPVVTIMG…LLQAELLELK (170 aa)) constitute a tr-type G domain. The interval 346-353 (GHVDHGKT) is G1. GTP is bound at residue 346–353 (GHVDHGKT). Residues 371–375 (GITQH) are G2. The G3 stretch occupies residues 392–395 (DTPG). GTP-binding positions include 392–396 (DTPGH) and 446–449 (NKMD). A G4 region spans residues 446 to 449 (NKMD). Positions 482–484 (SAK) are G5.

Belongs to the TRAFAC class translation factor GTPase superfamily. Classic translation factor GTPase family. IF-2 subfamily.

Its subcellular location is the cytoplasm. In terms of biological role, one of the essential components for the initiation of protein synthesis. Protects formylmethionyl-tRNA from spontaneous hydrolysis and promotes its binding to the 30S ribosomal subunits. Also involved in the hydrolysis of GTP during the formation of the 70S ribosomal complex. The sequence is that of Translation initiation factor IF-2 from Campylobacter fetus subsp. fetus (strain 82-40).